The chain runs to 645 residues: Homeobox protein B-H2 (645 aa).

Disordered stretches follow at residues 1–50 (MTTM…TTAT), 86–134 (SSGG…QAAL), 149–176 (RERE…AHHP), 240–259 (SHLS…HDER), 265–385 (MLQQ…KART), and 553–645 (GAQQ…ALEV). Low complexity predominate over residues 18–29 (SAPSATAHHPAA). The span at 106–121 (QHHHHHQQQQQHHHHQ) shows a compositional bias: basic residues. Positions 122–134 (QQQQQQQHQQAAL) are enriched in low complexity. Over residues 149 to 165 (REREREREREHYRERHS) the composition is skewed to basic and acidic residues. Residues 244-253 (HQQHHPHLHH) are compositionally biased toward basic residues. Residues 275–316 (NNNNNNNNSSSASNNNNNNNNSASANSNIISGNSSSSNNNNG) show a composition bias toward low complexity. The segment covering 317 to 328 (SGNGNMLLGGPG) has biased composition (gly residues). Positions 329-339 (SSISGDQASTI) are enriched in polar residues. A compositionally biased stretch (low complexity) spans 362-377 (SSANGDSSSHLSLSLS). A DNA-binding region (homeobox) is located at residues 380–439 (QRKARTAFTDHQLQTLEKSFERQKYLSVQDRMELANKLELSDCQVKTWYQNRRTKWKRQT). The segment covering 553–574 (GAQQQQQQPPAASRSPATSQSA) has biased composition (low complexity). Residues 583 to 592 (TSSSSRQRLI) are compositionally biased toward polar residues. Thr-593 is modified (phosphothreonine). The span at 594 to 603 (PSPPLNPGSP) shows a compositional bias: pro residues. Residues Ser-595 and Ser-602 each carry the phosphoserine modification. Residues 618–632 (DEERDIERERERERE) show a composition bias toward basic and acidic residues. Residues 633 to 645 (RDEDDEEELALEV) are compositionally biased toward acidic residues.

It belongs to the Antp homeobox family. B-H1 and B-H2 are abundant in the eye-antenna imaginal disk. Expressed in R1 and R6 cells throughout larval stage until 30 hours after puparium formation, at which time expression is seen in the anterior and posterior primary pigment cells. Coexpressed in embryonic glial cells, neurons of the CNS and PNS, most latitudinal anterior cells of the developing notum and the central circular region of the leg and antennal imaginal disk throughout larval development.

It localises to the nucleus. Functionally, B-H1 and B-H2 are regulated by members of the wg signaling pathway; wg and dpp. B-H1 and B-H2 are coexpressed and functionally required in R1 and R6 receptor cells and primary pigment cells for normal eye development. Coexpression is also required for the fate determination of external sensory organs, formation of notal microchaetae, formation of presutural macrochaetae, antennal development and for distal leg morphogenesis; segmentation and specification of tarsal segments 3-5. In Drosophila melanogaster (Fruit fly), this protein is Homeobox protein B-H2 (B-H2).